Consider the following 361-residue polypeptide: Chorismate synthase (361 aa).

2 residues coordinate NADP(+): Arg-48 and Arg-54. FMN is bound by residues 125–127 (RSS), 238–239 (NA), Gly-278, 293–297 (KPTSS), and Arg-319.

This sequence belongs to the chorismate synthase family. In terms of assembly, homotetramer. FMNH2 serves as cofactor.

The enzyme catalyses 5-O-(1-carboxyvinyl)-3-phosphoshikimate = chorismate + phosphate. Its pathway is metabolic intermediate biosynthesis; chorismate biosynthesis; chorismate from D-erythrose 4-phosphate and phosphoenolpyruvate: step 7/7. Functionally, catalyzes the anti-1,4-elimination of the C-3 phosphate and the C-6 proR hydrogen from 5-enolpyruvylshikimate-3-phosphate (EPSP) to yield chorismate, which is the branch point compound that serves as the starting substrate for the three terminal pathways of aromatic amino acid biosynthesis. This reaction introduces a second double bond into the aromatic ring system. This is Chorismate synthase from Yersinia pseudotuberculosis serotype O:1b (strain IP 31758).